Consider the following 144-residue polypeptide: 3-dehydroquinate dehydratase (144 aa).

The active-site Proton acceptor is Tyr-24. The substrate site is built by Asn-73, His-79, and Asp-86. His-99 serves as the catalytic Proton donor. Residues 100–101 (LS) and Arg-110 each bind substrate.

Belongs to the type-II 3-dehydroquinase family. As to quaternary structure, homododecamer.

It catalyses the reaction 3-dehydroquinate = 3-dehydroshikimate + H2O. The protein operates within metabolic intermediate biosynthesis; chorismate biosynthesis; chorismate from D-erythrose 4-phosphate and phosphoenolpyruvate: step 3/7. Catalyzes a trans-dehydration via an enolate intermediate. In Shewanella sp. (strain ANA-3), this protein is 3-dehydroquinate dehydratase.